The following is a 373-amino-acid chain: 3 beta-hydroxysteroid dehydrogenase/Delta 5--&gt;4-isomerase type 3 (373 aa).

Residue tyrosine 155 is the Proton acceptor of the active site. Lysine 159 contributes to the NAD(+) binding site. Residues 288 to 308 (VPILYWLAFLLETVSFLLSPI) traverse the membrane as a helical segment.

The protein belongs to the 3-beta-HSD family. Liver and kidney. Greater expression in liver.

It localises to the endoplasmic reticulum membrane. The protein resides in the mitochondrion membrane. It catalyses the reaction a 3beta-hydroxy-Delta(5)-steroid + NAD(+) = a 3-oxo-Delta(5)-steroid + NADH + H(+). The enzyme catalyses a 3-oxo-Delta(5)-steroid = a 3-oxo-Delta(4)-steroid. It participates in lipid metabolism; steroid biosynthesis. Its function is as follows. 3-beta-HSD is a bifunctional enzyme, that catalyzes the oxidative conversion of Delta(5)-ene-3-beta-hydroxy steroid, and the oxidative conversion of ketosteroids. The 3-beta-HSD enzymatic system plays a crucial role in the biosynthesis of all classes of hormonal steroids. The chain is 3 beta-hydroxysteroid dehydrogenase/Delta 5--&gt;4-isomerase type 3 (Hsd3b3) from Mus musculus (Mouse).